A 93-amino-acid chain; its full sequence is UPF0297 protein PEPE_1262 (93 aa).

The protein belongs to the UPF0297 family.

This Pediococcus pentosaceus (strain ATCC 25745 / CCUG 21536 / LMG 10740 / 183-1w) protein is UPF0297 protein PEPE_1262.